Here is a 77-residue protein sequence, read N- to C-terminus: Small ribosomal subunit protein bS18 (77 aa).

The protein belongs to the bacterial ribosomal protein bS18 family. In terms of assembly, part of the 30S ribosomal subunit. Forms a tight heterodimer with protein bS6.

In terms of biological role, binds as a heterodimer with protein bS6 to the central domain of the 16S rRNA, where it helps stabilize the platform of the 30S subunit. This is Small ribosomal subunit protein bS18 from Lactobacillus gasseri (strain ATCC 33323 / DSM 20243 / BCRC 14619 / CIP 102991 / JCM 1131 / KCTC 3163 / NCIMB 11718 / NCTC 13722 / AM63).